A 154-amino-acid polypeptide reads, in one-letter code: 6,7-dimethyl-8-ribityllumazine synthase (154 aa).

Residues 22-23 (FN), 56-58 (SWE), and 80-82 (VLI) each bind 5-amino-6-(D-ribitylamino)uracil. 85–86 (AT) lines the (2S)-2-hydroxy-3-oxobutyl phosphate pocket. The Proton donor role is filled by His-88. Phe-113 provides a ligand contact to 5-amino-6-(D-ribitylamino)uracil. Arg-127 provides a ligand contact to (2S)-2-hydroxy-3-oxobutyl phosphate. Lys-135 provides a ligand contact to 5-amino-6-(D-ribitylamino)uracil.

This sequence belongs to the DMRL synthase family. Forms an icosahedral capsid composed of 60 subunits, arranged as a dodecamer of pentamers.

The enzyme catalyses (2S)-2-hydroxy-3-oxobutyl phosphate + 5-amino-6-(D-ribitylamino)uracil = 6,7-dimethyl-8-(1-D-ribityl)lumazine + phosphate + 2 H2O + H(+). It functions in the pathway cofactor biosynthesis; riboflavin biosynthesis; riboflavin from 2-hydroxy-3-oxobutyl phosphate and 5-amino-6-(D-ribitylamino)uracil: step 1/2. Its function is as follows. Catalyzes the formation of 6,7-dimethyl-8-ribityllumazine by condensation of 5-amino-6-(D-ribitylamino)uracil with 3,4-dihydroxy-2-butanone 4-phosphate. This is the penultimate step in the biosynthesis of riboflavin. In Aquifex aeolicus (strain VF5), this protein is 6,7-dimethyl-8-ribityllumazine synthase (ribH).